The chain runs to 473 residues: Cytochrome P450 716A2 (473 aa).

Residues 1 to 21 traverse the membrane as a helical segment; sequence MYLTIIFLFISSIIFPLLFFL. Cys420 provides a ligand contact to heme.

Belongs to the cytochrome P450 family. The cofactor is heme.

It localises to the membrane. In terms of biological role, possesses triterpene oxidizing activity. Catalyzes the C28 hydroxylation of alpha-amyrin, beta-amyrin, and lupeol, producing uvaol, erythrodiol, and betulin, respectively. Catalyzes the C28 carboxylation of alpha- and beta-amyrin. Possesses 22alpha-hydroxylation activity against alpha- and beta-amaryn. This is Cytochrome P450 716A2 from Arabidopsis thaliana (Mouse-ear cress).